A 199-amino-acid polypeptide reads, in one-letter code: uncharacterized protein (199 aa).

The next 4 membrane-spanning stretches (helical) occupy residues 41-61 (LFIPPSACRIDLSVFPWAFIC), 72-92 (SLICSPCFSTVWVSLLICSPW), 109-129 (TVWVNLLICSPWAAKVVSIFV), and 145-165 (VTYSVFTGITGLLSLNCLLNL).

This sequence to M.pneumoniae MPN_037.

It is found in the cell membrane. This is an uncharacterized protein from Mycoplasma pneumoniae (strain ATCC 29342 / M129 / Subtype 1) (Mycoplasmoides pneumoniae).